A 1322-amino-acid polypeptide reads, in one-letter code: C-Jun-amino-terminal kinase-interacting protein 3 (1322 aa).

The region spanning 12 to 100 is the RH1 domain; the sequence is VVVYQDDYCS…LTQYEREKAL (89 aa). The interval 50 to 80 is kinesin-binding domain (KBD); essential for its function in axon elongation; that stretch reads EVVKELMPLVVNVLENLDSVLSENQEHEVEL. A coiled-coil region spans residues 66–167; it reads LDSVLSENQE…KKEYNALHQR (102 aa). 2 disordered regions span residues 183 to 211 and 245 to 317; these read KMQQVGGGGQTESSLPGRSRKERPTSLNV and SSSY…NSRN. Positions 210–226 are JNK-binding domain (JBD); essential for its function in axon elongation; it reads NVFPLADGMVRAQMGGK. Over residues 261 to 270 the composition is skewed to low complexity; it reads SSAAATPSTT. Phosphothreonine occurs at positions 266, 276, and 287. A compositionally biased stretch (polar residues) spans 271–282; the sequence is GTKSNTPTSSVP. Basic residues predominate over residues 305–315; the sequence is NNKRAREKRNS. 3 positions are modified to phosphoserine: Ser-315, Ser-365, and Ser-366. Positions 424-459 are leucine zipper-like domain (LZ); essential for its function in axon elongation; that stretch reads QLLETKNALNVVKNDLIAKVDQLSGEQEVLKGELEA. Residues 443–534 are a coiled coil; sequence VDQLSGEQEV…KERLMELQEA (92 aa). Residues 459-515 are interaction with NTRK2; sequence AAKQAKVKLENRIKELEEELKRVKSEAVTARREPREEVEDDKIPMAQRRRFTRVEMA. The region spanning 506 to 580 is the RH2 domain; it reads RRRFTRVEMA…SPPPAKRSYP (75 aa). 2 positions are modified to phosphoserine: Ser-588 and Ser-662. Disordered regions lie at residues 704 to 754, 844 to 952, and 1281 to 1307; these read WKPN…EADA, PRSN…TTSS, and RIGDGEDDETEEGTGDVNQTKPSLSKA. Residues 724–750 show a composition bias toward basic and acidic residues; that stretch reads LTCDREGEGEPKSTHPSPEKKKAKEVP. A compositionally biased stretch (polar residues) spans 914–937; that stretch reads APTQSSSTQPASENGSESDGSIVQ. The span at 941–952 shows a compositional bias: low complexity; it reads EPSGESSATTSS. Over residues 1285–1294 the composition is skewed to acidic residues; that stretch reads GEDDETEEGT.

This sequence belongs to the JIP scaffold family. As to quaternary structure, forms homo- or heterooligomeric complexes. The central region of MAPK8IP3 interacts with the C-terminal of MAPK8IP2 but not MAPK8IP1. Binds specific components of the JNK signaling pathway namely MAPK8/JNK1, MAPK9/JNK2 and MAPK10/JNK3 to the N-terminal region, MAP2K4/MKK4 and MAP2K7/MKK7 to the central region and MAP3K11 to the C-terminal region. Binds the TPR motif-containing C-terminal of kinesin light chain, KLC1. Pre-assembled MAPK8IP1 scaffolding complexes are then transported as a cargo of kinesin, to the required subcellular location. Interacts with ROCK1 and this interaction is enhanced by ultraviolet-B (UVB) radiation. Interacts with SH3RF2. Interacts with NTRK3/TRKC. Interacts with NTRK2/TRKB. Phosphorylation by ROCK1 is crucial for the recruitment of JNK.

The protein resides in the cytoplasm. The protein localises to the golgi apparatus. It is found in the cytoplasmic vesicle. It localises to the cell projection. Its subcellular location is the growth cone. The protein resides in the axon. The protein localises to the dendrite. It is found in the perinuclear region. The JNK-interacting protein (JIP) group of scaffold proteins selectively mediates JNK signaling by aggregating specific components of the MAPK cascade to form a functional JNK signaling module. May function as a regulator of vesicle transport, through interactions with the JNK-signaling components and motor proteins. Promotes neuronal axon elongation in a kinesin- and JNK-dependent manner. Activates cofilin at axon tips via local activation of JNK, thereby regulating filopodial dynamics and enhancing axon elongation. Its binding to kinesin heavy chains (KHC), promotes kinesin-1 motility along microtubules and is essential for axon elongation and regeneration. Regulates cortical neuronal migration by mediating NTRK2/TRKB anterograde axonal transport during brain development. Acts as an adapter that bridges the interaction between NTRK2/TRKB and KLC1 and drives NTRK2/TRKB axonal but not dendritic anterograde transport, which is essential for subsequent BDNF-triggered signaling and filopodia formation. The protein is C-Jun-amino-terminal kinase-interacting protein 3 (Mapk8ip3) of Rattus norvegicus (Rat).